The sequence spans 324 residues: Uroporphyrinogen decarboxylase (324 aa).

Residues 14-18 (RQAGR), Phe-32, Asp-63, Tyr-136, Ser-191, and His-302 contribute to the substrate site.

The protein belongs to the uroporphyrinogen decarboxylase family. As to quaternary structure, homodimer.

The protein resides in the cytoplasm. It carries out the reaction uroporphyrinogen III + 4 H(+) = coproporphyrinogen III + 4 CO2. It functions in the pathway porphyrin-containing compound metabolism; protoporphyrin-IX biosynthesis; coproporphyrinogen-III from 5-aminolevulinate: step 4/4. Its function is as follows. Catalyzes the decarboxylation of four acetate groups of uroporphyrinogen-III to yield coproporphyrinogen-III. The chain is Uroporphyrinogen decarboxylase from Neorickettsia sennetsu (strain ATCC VR-367 / Miyayama) (Ehrlichia sennetsu).